The sequence spans 200 residues: Recombination protein RecR (200 aa).

A C4-type zinc finger spans residues 60–75 (CVYCQALTEDDVCNIC). The Toprim domain occupies 83–177 (TKLCIIESML…KISRIGFGVP (95 aa)).

It belongs to the RecR family.

Its function is as follows. May play a role in DNA repair. It seems to be involved in an RecBC-independent recombinational process of DNA repair. It may act with RecF and RecO. This chain is Recombination protein RecR, found in Francisella tularensis subsp. holarctica (strain OSU18).